The following is an 855-amino-acid chain: DNA mismatch repair protein MutS (855 aa).

Residue 615 to 622 coordinates ATP; that stretch reads GPNMGGKS.

The protein belongs to the DNA mismatch repair MutS family.

This protein is involved in the repair of mismatches in DNA. It is possible that it carries out the mismatch recognition step. This protein has a weak ATPase activity. This is DNA mismatch repair protein MutS from Aliivibrio salmonicida (strain LFI1238) (Vibrio salmonicida (strain LFI1238)).